Here is a 145-residue protein sequence, read N- to C-terminus: Superoxide dismutase [Mn/Fe] (145 aa).

The Fe(3+) site is built by His10 and His64. Mn(2+) is bound by residues His10 and His64.

The protein belongs to the iron/manganese superoxide dismutase family. Mn(2+) is required as a cofactor. Fe(3+) serves as cofactor.

It carries out the reaction 2 superoxide + 2 H(+) = H2O2 + O2. In terms of biological role, destroys superoxide anion radicals which are normally produced within the cells and which are toxic to biological systems. Catalyzes the dismutation of superoxide anion radicals into O2 and H2O2 by successive reduction and oxidation of the transition metal ion at the active site. The protein is Superoxide dismutase [Mn/Fe] (sodA) of Streptococcus porcinus.